We begin with the raw amino-acid sequence, 703 residues long: MGVRSPLSASGPRGAAVLVLLLLGVALCSAVEEKKVCQGTNNKLTQLGHVEDHFTSLQRMYNNCEVVLSNLEITYVEHNRDLTFLKTIQEVAGYVLIALNMVDVIPLENLQIIRGNVLYDNSFALAVLSNYHMNKTQGLRELPMKRLSEILNGGVKISNNPKLCNMDTVLWNDIIDTSRKPLTVLDFASNLSSCPKCHPNCTEDHCWGAGEQNCQTLTKVICAQQCSGRCRGKVPSDCCHNQCAAGCTGPRESDCLACRKFRDDATCKDTCPPLVLYNPTTYQMDVNPEGKYSFGATCVRECPHNYVVTDHGSCVRSCNTDTYEVEENGVRKCKKCDGLCSKVCNGIGIGELKGILSINATNIDSFKNCTKINGDVSILPVAFLGDAFTKTLPLDPKKLDVFRTVKEISGFLLIQAWPDNATDLYAFENLEIIRGRTKQHGQYSLAVVNLKIQSLGLRSLKEISDGDIAIMKNKNLCYADTMNWRSLFATQSQKTKIIQNRNKNDCTADRHVCDPLCSDVGCWGPGPFHCFSCRFFSRQKECVKQCNILQGEPREFERDSKCLPCHSECLVQNSTAYNTTCSGPGPDHCMKCAHFIDGPHCVKACPAGVLGENDTLVWKYADANAVCQLCHPNCTRGCKGPGLEGCPNGSKTPSIAAGVVGGLLCLVVVGLGIGLYLRRRHIVRKRTLRRLLQERELVEPLTP.

A signal peptide spans 1-30; it reads MGVRSPLSASGPRGAAVLVLLLLGVALCSA. Residues 31–654 are Extracellular-facing; the sequence is VEEKKVCQGT…GCPNGSKTPS (624 aa). A disulfide bond links Cys37 and Cys64. N-linked (GlcNAc...) asparagine glycans are attached at residues Asn134, Asn190, and Asn200. Disulfide bonds link Cys164–Cys194, Cys197–Cys206, Cys201–Cys214, Cys222–Cys230, Cys226–Cys238, Cys239–Cys247, Cys243–Cys255, Cys258–Cys267, Cys271–Cys298, Cys302–Cys314, Cys318–Cys333, Cys336–Cys340, and Cys344–Cys369. N-linked (GlcNAc...) asparagine glycans are attached at residues Asn359, Asn368, and Asn420. 11 disulfides stabilise this stretch: Cys477/Cys506, Cys513/Cys522, Cys517/Cys530, Cys533/Cys542, Cys546/Cys562, Cys565/Cys581, Cys569/Cys589, Cys592/Cys601, Cys605/Cys627, Cys630/Cys638, and Cys634/Cys646. Residues Asn573 and Asn578 are each glycosylated (N-linked (GlcNAc...) asparagine). N-linked (GlcNAc...) asparagine glycans are attached at residues Asn613 and Asn633. N-linked (GlcNAc...) asparagine glycosylation is present at Asn648. Residues 655-667 traverse the membrane as a helical segment; it reads IAAGVVGGLLCLV. Residues 668 to 703 lie on the Cytoplasmic side of the membrane; sequence VVGLGIGLYLRRRHIVRKRTLRRLLQERELVEPLTP. A phosphothreonine mark is found at Thr687 and Thr702.

The protein belongs to the protein kinase superfamily. Tyr protein kinase family. EGF receptor subfamily. As to quaternary structure, binding of the ligand triggers homo- and/or heterodimerization of the receptor triggering its autophosphorylation. In terms of processing, phosphorylated. Autophosphorylates.

Its subcellular location is the cell membrane. It localises to the endoplasmic reticulum membrane. The protein localises to the golgi apparatus membrane. The protein resides in the nucleus membrane. It is found in the endosome. Its subcellular location is the endosome membrane. It localises to the nucleus. The enzyme catalyses L-tyrosyl-[protein] + ATP = O-phospho-L-tyrosyl-[protein] + ADP + H(+). Its activity is regulated as follows. Endocytosis and inhibition of the activated EGFR by phosphatases constitute immediate regulatory mechanisms. Moreover, inducible feedback inhibitors may constitute alternative regulatory mechanisms for the EGFR signaling. In terms of biological role, receptor tyrosine kinase binding ligands of the EGF family and activating several signaling cascades to convert extracellular cues into appropriate cellular responses. Known ligands include EGF and TGFA/TGF-alpha. Ligand binding triggers receptor homo- and/or heterodimerization and autophosphorylation on key cytoplasmic residues. The phosphorylated receptor recruits adapter proteins like GRB2 which in turn activates complex downstream signaling cascades. Activates at least 4 major downstream signaling cascades including the RAS-RAF-MEK-ERK, PI3 kinase-AKT, PLCgamma-PKC and STATs modules. May also activate the NF-kappa-B signaling cascade. This Gallus gallus (Chicken) protein is Epidermal growth factor receptor (EGFR).